A 758-amino-acid chain; its full sequence is Meiotic driver SPOK4 (758 aa).

Residues 4 to 41 (KDRITQLLRKLEEAKAREEEAKAREAQERCEKERLQLE) adopt a coiled-coil conformation. 2 disordered regions span residues 180-230 (ELTQ…GVGI) and 414-499 (LSSA…MADP). Basic and acidic residues predominate over residues 181 to 190 (LTQEDDRSSG). The span at 416–429 (SAASSQNTENSEYT) shows a compositional bias: polar residues. Residues 457-468 (NEHDEHDEDHSE) show a composition bias toward basic and acidic residues.

Its subcellular location is the cytoplasm. The protein localises to the nucleus. Promotes unequal transmission of alleles from the parental zygote to progeny spores by acting as poison/antidote system, leading to poisoning of progeny that do not inherit the allele. May possess DNA nuclease activity that leads to spore killing, and a kinase activity that confers resistance to the nuclease activity. Can suppress meiotic drive by the P.comata SPOK1 protein. This chain is Meiotic driver SPOK4, found in Podospora anserina (Pleurage anserina).